A 264-amino-acid polypeptide reads, in one-letter code: Thymidylate synthase (264 aa).

Arg21 is a dUMP binding site. His51 serves as a coordination point for (6R)-5,10-methylene-5,6,7,8-tetrahydrofolate. Position 126–127 (126–127 (RR)) interacts with dUMP. Cys146 functions as the Nucleophile in the catalytic mechanism. DUMP contacts are provided by residues 166–169 (RSCD), Asn177, and 207–209 (HLY). Asp169 is a binding site for (6R)-5,10-methylene-5,6,7,8-tetrahydrofolate. Ala263 is a binding site for (6R)-5,10-methylene-5,6,7,8-tetrahydrofolate.

Belongs to the thymidylate synthase family. Bacterial-type ThyA subfamily. As to quaternary structure, homodimer.

The protein localises to the cytoplasm. The catalysed reaction is dUMP + (6R)-5,10-methylene-5,6,7,8-tetrahydrofolate = 7,8-dihydrofolate + dTMP. It participates in pyrimidine metabolism; dTTP biosynthesis. In terms of biological role, catalyzes the reductive methylation of 2'-deoxyuridine-5'-monophosphate (dUMP) to 2'-deoxythymidine-5'-monophosphate (dTMP) while utilizing 5,10-methylenetetrahydrofolate (mTHF) as the methyl donor and reductant in the reaction, yielding dihydrofolate (DHF) as a by-product. This enzymatic reaction provides an intracellular de novo source of dTMP, an essential precursor for DNA biosynthesis. The protein is Thymidylate synthase of Salmonella typhimurium (strain LT2 / SGSC1412 / ATCC 700720).